The chain runs to 593 residues: Pyruvate kinase isozyme A, chloroplastic (593 aa).

Positions 57-94 (DEPQSSPVLVSENGSGGVLSSATQEYGRNAAPGTDSSS) are disordered. Arg-144 provides a ligand contact to substrate. 3 residues coordinate K(+): Asn-146, Asp-178, and Thr-179. Residue 146–149 (NMCH) participates in ATP binding. Mg(2+) is bound at residue Glu-343. Substrate is bound by residues Gly-366, Asp-367, and Ser-399. Asp-367 contacts Mg(2+).

The protein belongs to the pyruvate kinase family. Mg(2+) serves as cofactor. Requires K(+) as cofactor. As to expression, highest levels in roots. Also found in stems, leaves and flowers.

The protein localises to the plastid. Its subcellular location is the chloroplast. The catalysed reaction is pyruvate + ATP = phosphoenolpyruvate + ADP + H(+). It participates in carbohydrate degradation; glycolysis; pyruvate from D-glyceraldehyde 3-phosphate: step 5/5. The polypeptide is Pyruvate kinase isozyme A, chloroplastic (Nicotiana tabacum (Common tobacco)).